The chain runs to 260 residues: Rhythmically expressed gene 2 protein (260 aa).

This Drosophila melanogaster (Fruit fly) protein is Rhythmically expressed gene 2 protein (Reg-2).